The chain runs to 308 residues: Glutaminase (308 aa).

Residues Ser66, Asn117, Glu161, Asn168, Tyr192, Tyr244, and Val262 each coordinate substrate.

It belongs to the glutaminase family. As to quaternary structure, homotetramer.

It carries out the reaction L-glutamine + H2O = L-glutamate + NH4(+). The sequence is that of Glutaminase from Klebsiella pneumoniae subsp. pneumoniae (strain ATCC 700721 / MGH 78578).